Consider the following 279-residue polypeptide: Cytochrome c1 (279 aa).

The signal sequence occupies residues methionine 1–alanine 21. The heme c site is built by cysteine 55, cysteine 58, histidine 59, and methionine 204. The helical transmembrane segment at methionine 248 to threonine 266 threads the bilayer.

In terms of assembly, the main subunits of complex b-c1 are: cytochrome b, cytochrome c1 and the Rieske protein. In terms of processing, binds 1 heme c group covalently per subunit.

It is found in the cell membrane. Functionally, component of the ubiquinol-cytochrome c reductase complex (complex III or cytochrome b-c1 complex), which is a respiratory chain that generates an electrochemical potential coupled to ATP synthesis. c1 functions as an electron donor to cytochrome c. The sequence is that of Cytochrome c1 (petC) from Rhodobacter capsulatus (strain ATCC BAA-309 / NBRC 16581 / SB1003).